A 154-amino-acid chain; its full sequence is Interleukin-2 (154 aa).

Positions 1–20 are cleaved as a signal peptide; that stretch reads MYKLQLLSCIALTLALVANS. An O-linked (GalNAc...) threonine glycan is attached at T23. C78 and C126 form a disulfide bridge.

The protein belongs to the IL-2 family.

The protein localises to the secreted. Cytokine produced by activated CD4-positive helper T-cells and to a lesser extend activated CD8-positive T-cells and natural killer (NK) cells that plays pivotal roles in the immune response and tolerance. Binds to a receptor complex composed of either the high-affinity trimeric IL-2R (IL2RA/CD25, IL2RB/CD122 and IL2RG/CD132) or the low-affinity dimeric IL-2R (IL2RB and IL2RG). Interaction with the receptor leads to oligomerization and conformation changes in the IL-2R subunits resulting in downstream signaling starting with phosphorylation of JAK1 and JAK3. In turn, JAK1 and JAK3 phosphorylate the receptor to form a docking site leading to the phosphorylation of several substrates including STAT5. This process leads to activation of several pathways including STAT, phosphoinositide-3-kinase/PI3K and mitogen-activated protein kinase/MAPK pathways. Functions as a T-cell growth factor and can increase NK-cell cytolytic activity as well. Promotes strong proliferation of activated B-cells and subsequently immunoglobulin production. Plays a pivotal role in regulating the adaptive immune system by controlling the survival and proliferation of regulatory T-cells, which are required for the maintenance of immune tolerance. Moreover, participates in the differentiation and homeostasis of effector T-cell subsets, including Th1, Th2, Th17 as well as memory CD8-positive T-cells. The sequence is that of Interleukin-2 (IL2) from Lama glama (Llama).